We begin with the raw amino-acid sequence, 800 residues long: Cation/H(+) antiporter 19 (800 aa).

12 consecutive transmembrane segments (helical) span residues 30 to 50 (FALPLIILQIVLVVVFTRLLA), 60 to 77 (RVIAEIIGGILLGPSALG), 92 to 112 (LTVLDTLANIGLLFFLFLVGL), 127 to 147 (LLIAIAGISLPFIVGVGTSFV), 158 to 178 (QLPFIVFMGVALSITAFPVLA), 196 to 216 (MSAAGVNDVAAWILLALAIAL), 224 to 244 (LVSVWVLLCGTGFVIFAVVAI), 278 to 298 (FVTDTIGIHALFGAFVVGIVA), 315 to 335 (LVSGLLLPLYFAASGLKTDVT), 343 to 363 (WGLLVLVILTTCFGKIVGTVG), 375 to 395 (AVTLGFLMNTKGLVELIVLNI), and 408 to 428 (AILVLMALFTTFITTPIVMLI). The disordered stretch occupies residues 776–800 (ADTRPLVEEDAEYDQSSRDISDLTA). A compositionally biased stretch (basic and acidic residues) spans 790 to 800 (QSSRDISDLTA).

The protein belongs to the monovalent cation:proton antiporter 2 (CPA2) transporter (TC 2.A.37) family. CHX (TC 2.A.37.4) subfamily. As to expression, expressed in the whole plant but preferentially in pollen.

It is found in the membrane. May operate as a cation/H(+) antiporter. The polypeptide is Cation/H(+) antiporter 19 (CHX19) (Arabidopsis thaliana (Mouse-ear cress)).